A 737-amino-acid polypeptide reads, in one-letter code: Methylcrotonoyl-CoA carboxylase subunit alpha, mitochondrial (737 aa).

The N-terminal 33 residues, 1-33 (MASRLLLLPRRRSRHGGASLLLARLLSSSSSEA), are a transit peptide targeting the mitochondrion. The Biotin carboxylation domain maps to 38-485 (AVEKVLVANR…DTHFIERYQN (448 aa)). Residues lysine 153, 185 to 246 (ANKI…PRHI), glutamate 237, and histidine 272 each bind ATP. One can recognise an ATP-grasp domain in the interval 157–355 (KRIMGAAGVP…LVEWQIRIAN (199 aa)). Positions 312, 326, and 328 each coordinate Mn(2+). Arginine 330 is a catalytic residue. Residues 636–665 (YRQTLRAEQSPDDSSQPSASSEARSHPKGS) are disordered. Residues 647–657 (DDSSQPSASSE) are compositionally biased toward low complexity. The Biotinyl-binding domain occupies 656–732 (SEARSHPKGS…FDSSVLFTVK (77 aa)). The residue at position 698 (lysine 698) is an N6-biotinyllysine.

Probably a heterodimer composed of biotin-containing alpha subunits and beta subunits. Requires biotin as cofactor. It depends on Mn(2+) as a cofactor.

Its subcellular location is the mitochondrion matrix. It catalyses the reaction 3-methylbut-2-enoyl-CoA + hydrogencarbonate + ATP = 3-methyl-(2E)-glutaconyl-CoA + ADP + phosphate + H(+). It functions in the pathway amino-acid degradation; L-leucine degradation; (S)-3-hydroxy-3-methylglutaryl-CoA from 3-isovaleryl-CoA: step 2/3. In terms of biological role, biotin-attachment subunit of the 3-methylcrotonyl-CoA carboxylase, an enzyme that catalyzes the conversion of 3-methylcrotonyl-CoA to 3-methylglutaconyl-CoA, a critical step for leucine and isovaleric acid catabolism. In Oryza sativa subsp. japonica (Rice), this protein is Methylcrotonoyl-CoA carboxylase subunit alpha, mitochondrial (MCCA).